The following is a 107-amino-acid chain: Integration host factor subunit alpha (107 aa).

It belongs to the bacterial histone-like protein family. In terms of assembly, heterodimer of an alpha and a beta chain.

Its function is as follows. This protein is one of the two subunits of integration host factor, a specific DNA-binding protein that functions in genetic recombination as well as in transcriptional and translational control. In Mesorhizobium japonicum (strain LMG 29417 / CECT 9101 / MAFF 303099) (Mesorhizobium loti (strain MAFF 303099)), this protein is Integration host factor subunit alpha.